A 716-amino-acid polypeptide reads, in one-letter code: DNA ligase (716 aa).

NAD(+) is bound by residues 50–54, 99–100, and Glu132; these read DAEYD and SL. Residue Lys134 is the N6-AMP-lysine intermediate of the active site. Positions 155, 192, 308, and 332 each coordinate NAD(+). The Zn(2+) site is built by Cys437, Cys439, Cys461, and Cys467. The BRCT domain occupies 638-716; sequence KSNSAVAGKT…EDEWLKLIGE (79 aa).

This sequence belongs to the NAD-dependent DNA ligase family. LigA subfamily. Mg(2+) is required as a cofactor. Requires Mn(2+) as cofactor.

It catalyses the reaction NAD(+) + (deoxyribonucleotide)n-3'-hydroxyl + 5'-phospho-(deoxyribonucleotide)m = (deoxyribonucleotide)n+m + AMP + beta-nicotinamide D-nucleotide.. Its function is as follows. DNA ligase that catalyzes the formation of phosphodiester linkages between 5'-phosphoryl and 3'-hydroxyl groups in double-stranded DNA using NAD as a coenzyme and as the energy source for the reaction. It is essential for DNA replication and repair of damaged DNA. The protein is DNA ligase of Bradyrhizobium diazoefficiens (strain JCM 10833 / BCRC 13528 / IAM 13628 / NBRC 14792 / USDA 110).